The following is a 261-amino-acid chain: MKILLTNDDGLYSAGLKAAYDALSELGEVFVVAPAVQRSGVGRSLSIMEPIRVSEVKVNGMRVFAVDGTPTDSVIIGMYEVIGEIPDLAVSGINLGENLSTEAATTSGTVGAALEAATHGSKTIAISLQMPDVSKFELTSKADFSFASKVLRGIAEIVLYKGLPEGVDLLNVNVPAKPNGKIAVTRLARRMYRVSVEKRLDPRGREYYWIYGEETEDAEEGTDIHALRQGYVSITPLKIDLTASVEFDIVEGWFDGLEWEV.

Asp-8, Asp-9, Ser-39, and Asn-94 together coordinate a divalent metal cation.

It belongs to the SurE nucleotidase family. A divalent metal cation is required as a cofactor.

The protein localises to the cytoplasm. The enzyme catalyses a ribonucleoside 5'-phosphate + H2O = a ribonucleoside + phosphate. Nucleotidase that shows phosphatase activity on nucleoside 5'-monophosphates. The sequence is that of 5'-nucleotidase SurE from Archaeoglobus fulgidus (strain ATCC 49558 / DSM 4304 / JCM 9628 / NBRC 100126 / VC-16).